Reading from the N-terminus, the 316-residue chain is D-alanine--D-alanine ligase (316 aa).

An ATP-grasp domain is found at 104-303; sequence KRVWLQHGLP…YADLCVAILA (200 aa). An ATP-binding site is contributed by 130-185; that stretch reads PDRLGLPLILKPPHEGSTVGITKVAGYSDMKAAYELAARFDAEVLAEQFITGRELT. Mg(2+)-binding residues include Asp257, Glu270, and Asn272.

Belongs to the D-alanine--D-alanine ligase family. It depends on Mg(2+) as a cofactor. Requires Mn(2+) as cofactor.

It localises to the cytoplasm. The enzyme catalyses 2 D-alanine + ATP = D-alanyl-D-alanine + ADP + phosphate + H(+). It functions in the pathway cell wall biogenesis; peptidoglycan biosynthesis. Functionally, cell wall formation. This is D-alanine--D-alanine ligase from Bordetella bronchiseptica (strain ATCC BAA-588 / NCTC 13252 / RB50) (Alcaligenes bronchisepticus).